Here is an 83-residue protein sequence, read N- to C-terminus: Alpha-neurotoxin NTX-2 (83 aa).

Positions 1–21 (MKTLLLTLLVVTIVCLDLGYT) are cleaved as a signal peptide. 4 disulfides stabilise this stretch: Cys-24–Cys-45, Cys-38–Cys-62, Cys-64–Cys-75, and Cys-76–Cys-81.

Belongs to the three-finger toxin family. Short-chain subfamily. Type I alpha-neurotoxin sub-subfamily. As to expression, expressed by the venom gland.

It is found in the secreted. Binds to muscle nicotinic acetylcholine receptor (nAChR) and inhibit acetylcholine from binding to the receptor, thereby impairing neuromuscular transmission. This chain is Alpha-neurotoxin NTX-2, found in Naja sputatrix (Malayan spitting cobra).